A 356-amino-acid chain; its full sequence is Dihydroorotate dehydrogenase (quinone) (356 aa).

FMN-binding positions include 60-64 (AGFDK) and Ser-84. Substrate is bound at residue Lys-64. 109 to 113 (NRFGF) lines the substrate pocket. Residues Asn-140 and Asn-171 each contribute to the FMN site. Asn-171 serves as a coordination point for substrate. Catalysis depends on Ser-174, which acts as the Nucleophile. Substrate is bound at residue Asn-176. Residues Lys-216 and Gly-244 each contribute to the FMN site. Residue 245–246 (NT) coordinates substrate. FMN-binding positions include Gly-267, Gly-296, and 317–318 (YS).

Belongs to the dihydroorotate dehydrogenase family. Type 2 subfamily. Monomer. It depends on FMN as a cofactor.

Its subcellular location is the cell membrane. The catalysed reaction is (S)-dihydroorotate + a quinone = orotate + a quinol. The protein operates within pyrimidine metabolism; UMP biosynthesis via de novo pathway; orotate from (S)-dihydroorotate (quinone route): step 1/1. In terms of biological role, catalyzes the conversion of dihydroorotate to orotate with quinone as electron acceptor. The chain is Dihydroorotate dehydrogenase (quinone) from Azorhizobium caulinodans (strain ATCC 43989 / DSM 5975 / JCM 20966 / LMG 6465 / NBRC 14845 / NCIMB 13405 / ORS 571).